The chain runs to 64 residues: Large ribosomal subunit protein bL28c (64 aa).

It belongs to the bacterial ribosomal protein bL28 family.

The protein resides in the plastid. It localises to the chloroplast. The chain is Large ribosomal subunit protein bL28c from Gracilaria tenuistipitata var. liui (Red alga).